We begin with the raw amino-acid sequence, 270 residues long: NAD kinase (270 aa).

Asp49 functions as the Proton acceptor in the catalytic mechanism. NAD(+)-binding positions include 49 to 50 (DG), Arg54, 126 to 127 (NE), Arg152, Asp154, 165 to 170 (TAYNKS), Ala189, and Gln227.

Belongs to the NAD kinase family. A divalent metal cation serves as cofactor.

The protein resides in the cytoplasm. It carries out the reaction NAD(+) + ATP = ADP + NADP(+) + H(+). Functionally, involved in the regulation of the intracellular balance of NAD and NADP, and is a key enzyme in the biosynthesis of NADP. Catalyzes specifically the phosphorylation on 2'-hydroxyl of the adenosine moiety of NAD to yield NADP. The chain is NAD kinase from Lactococcus lactis subsp. lactis (strain IL1403) (Streptococcus lactis).